An 853-amino-acid polypeptide reads, in one-letter code: Envelope glycoprotein gp160 (853 aa).

Residues 1-31 form the signal peptide; that stretch reads MRARGIERNCQNWWKWGIMLLGILMTCSAAD. Over 32–681 the chain is Extracellular; the sequence is NLWVTVYYGV…ITQWLWYIKI (650 aa). A disulfide bridge links Cys-53 with Cys-73. Residues Asn-87, Asn-129, Asn-137, Asn-143, Asn-153, Asn-157, Asn-183, Asn-188, Asn-198, Asn-235, Asn-242, Asn-263, Asn-277, and Asn-290 are each glycosylated (N-linked (GlcNAc...) asparagine; by host). 5 cysteine pairs are disulfide-bonded: Cys-118-Cys-206, Cys-125-Cys-197, Cys-130-Cys-154, Cys-219-Cys-248, and Cys-229-Cys-240. The interval 130–153 is V1; sequence CSDELRNNGTMGNNVTTEEKGMKN. Residues 154-197 are V2; sequence CSFNVTTVLKDKKQQVYALFYRLDIVPIDNDSSTNSTNYRLINC. Residues 297–329 are V3; that stretch reads CARPYQNTRQRTPIGLGQSLYTTRSRSIIGQAH. A disulfide bridge links Cys-297 with Cys-330. Asn-331 and Asn-353 each carry an N-linked (GlcNAc...) asparagine; by host glycan. A CD4-binding loop region spans residues 362–372; it reads SSGGDPEITTH. Disulfide bonds link Cys-376–Cys-442 and Cys-383–Cys-416. The interval 383 to 416 is V4; it reads CNTSGLFNSTWNISAWNNITESNNSTNTNITLQC. Residues Asn-384, Asn-390, Asn-394, Asn-400, Asn-405, Asn-406, Asn-411, Asn-445, Asn-458, Asn-459, and Asn-462 are each glycosylated (N-linked (GlcNAc...) asparagine; by host). V5 regions lie at residues 457 to 468 and 460 to 468; these read INNSTNETFRPG and STNETFRPG. Residues 509–529 form a fusion peptide region; sequence AIGLGAMFLGFLGAAGSTMGA. An immunosuppression region spans residues 571-589; the sequence is KQLQARILAVERYLKDQQL. Cys-595 and Cys-601 are joined by a disulfide. Residues Asn-608, Asn-613, Asn-622, and Asn-634 are each glycosylated (N-linked (GlcNAc...) asparagine; by host). The stretch at 630-664 forms a coiled coil; the sequence is REIDNYTGLIYSLIEESQTQQEKNEKELLELDKWA. The segment at 659-680 is MPER; binding to GalCer; the sequence is ELDKWASLWNWFSITQWLWYIK. The chain crosses the membrane as a helical span at residues 682–702; the sequence is FIMIIGGLIGLRIVFAVLSLV. Residues 703-853 lie on the Cytoplasmic side of the membrane; sequence NRVRQGYSPL…IRQGLERSLL (151 aa). The YXXL motif; contains endocytosis signal signature appears at 709-712; sequence YSPL. A disordered region spans residues 716–738; it reads TLLPAPRGPDRPEGTEEEGGERG. Over residues 723–738 the composition is skewed to basic and acidic residues; the sequence is GPDRPEGTEEEGGERG. S-palmitoyl cysteine; by host attachment occurs at residues Cys-761 and Cys-834. The Di-leucine internalization motif motif lies at 852-853; sequence LL.

This sequence belongs to the HIV-1 env protein family. The mature envelope protein (Env) consists of a homotrimer of non-covalently associated gp120-gp41 heterodimers. The resulting complex protrudes from the virus surface as a spike. There seems to be as few as 10 spikes on the average virion. Interacts with host CD4, CCR5 and CXCR4. Gp120 also interacts with the C-type lectins CD209/DC-SIGN and CLEC4M/DC-SIGNR (collectively referred to as DC-SIGN(R)). Gp120 and gp41 interact with GalCer. Gp120 interacts with host ITGA4/ITGB7 complex; on CD4+ T-cells, this interaction results in rapid activation of integrin ITGAL/LFA-1, which facilitates efficient cell-to-cell spreading of HIV-1. Gp120 interacts with cell-associated heparan sulfate; this interaction increases virus infectivity on permissive cells and may be involved in infection of CD4- cells. In terms of assembly, the mature envelope protein (Env) consists of a homotrimer of non-covalently associated gp120-gp41 heterodimers. The resulting complex protrudes from the virus surface as a spike. There seems to be as few as 10 spikes on the average virion. Highly glycosylated by host. The high number of glycan on the protein is reffered to as 'glycan shield' because it contributes to hide protein sequence from adaptive immune system. Post-translationally, palmitoylation of the transmembrane protein and of Env polyprotein (prior to its proteolytic cleavage) is essential for their association with host cell membrane lipid rafts. Palmitoylation is therefore required for envelope trafficking to classical lipid rafts, but not for viral replication. In terms of processing, specific enzymatic cleavages in vivo yield mature proteins. Envelope glycoproteins are synthesized as an inactive precursor that is heavily N-glycosylated and processed likely by host cell furin in the Golgi to yield the mature SU and TM proteins. The cleavage site between SU and TM requires the minimal sequence [KR]-X-[KR]-R. About 2 of the 9 disulfide bonds of gp41 are reduced by P4HB/PDI, following binding to CD4 receptor.

The protein localises to the virion membrane. The protein resides in the host cell membrane. It is found in the host endosome membrane. Oligomerizes in the host endoplasmic reticulum into predominantly trimers. In a second time, gp160 transits in the host Golgi, where glycosylation is completed. The precursor is then proteolytically cleaved in the trans-Golgi and thereby activated by cellular furin or furin-like proteases to produce gp120 and gp41. Functionally, attaches the virus to the host lymphoid cell by binding to the primary receptor CD4. This interaction induces a structural rearrangement creating a high affinity binding site for a chemokine coreceptor like CXCR4 and/or CCR5. Acts as a ligand for CD209/DC-SIGN and CLEC4M/DC-SIGNR, which are respectively found on dendritic cells (DCs), and on endothelial cells of liver sinusoids and lymph node sinuses. These interactions allow capture of viral particles at mucosal surfaces by these cells and subsequent transmission to permissive cells. HIV subverts the migration properties of dendritic cells to gain access to CD4+ T-cells in lymph nodes. Virus transmission to permissive T-cells occurs either in trans (without DCs infection, through viral capture and transmission), or in cis (following DCs productive infection, through the usual CD4-gp120 interaction), thereby inducing a robust infection. In trans infection, bound virions remain infectious over days and it is proposed that they are not degraded, but protected in non-lysosomal acidic organelles within the DCs close to the cell membrane thus contributing to the viral infectious potential during DCs' migration from the periphery to the lymphoid tissues. On arrival at lymphoid tissues, intact virions recycle back to DCs' cell surface allowing virus transmission to CD4+ T-cells. In terms of biological role, acts as a class I viral fusion protein. Under the current model, the protein has at least 3 conformational states: pre-fusion native state, pre-hairpin intermediate state, and post-fusion hairpin state. During fusion of viral and target intracellular membranes, the coiled coil regions (heptad repeats) assume a trimer-of-hairpins structure, positioning the fusion peptide in close proximity to the C-terminal region of the ectodomain. The formation of this structure appears to drive apposition and subsequent fusion of viral and target cell membranes. Complete fusion occurs in host cell endosomes and is dynamin-dependent, however some lipid transfer might occur at the plasma membrane. The virus undergoes clathrin-dependent internalization long before endosomal fusion, thus minimizing the surface exposure of conserved viral epitopes during fusion and reducing the efficacy of inhibitors targeting these epitopes. Membranes fusion leads to delivery of the nucleocapsid into the cytoplasm. The polypeptide is Envelope glycoprotein gp160 (Human immunodeficiency virus type 1 group M subtype D (isolate ELI) (HIV-1)).